The following is an 805-amino-acid chain: Pentatricopeptide repeat-containing protein At4g01570 (805 aa).

PPR repeat units lie at residues 91-125 (SATA…GVNL), 126-160 (DQTM…GDCL), 161-196 (NPSV…DNHS), 211-241 (GTVA…LKGM), 247-277 (DTWS…MKER), 288-322 (DICT…GHEP), 323-357 (DNST…GFVP), 358-392 (DTIV…GVRA), 393-427 (SCWT…GQFV), 428-462 (DAIT…GFSV), 463-497 (DLVT…NLVP), 593-627 (DVDM…GVTD), 629-663 (TSYT…FCAA), 664-698 (DIAT…GGYL), 699-733 (DIVM…GINP), and 734-768 (DVVS…GCLP).

This sequence belongs to the PPR family. P subfamily.

The protein is Pentatricopeptide repeat-containing protein At4g01570 of Arabidopsis thaliana (Mouse-ear cress).